The primary structure comprises 101 residues: MIPGEIIAAAGDIELNGGLPTITIEVSNSGDRPVQVGSHYHFAETNPGLIFDRDAARGRRLDIPAGTAVRFEPGQTRQVTLIPLSGKREVFGFRQQVMGKL.

It belongs to the urease beta subunit family. Heterotrimer of UreA (gamma), UreB (beta) and UreC (alpha) subunits. Three heterotrimers associate to form the active enzyme.

It is found in the cytoplasm. It carries out the reaction urea + 2 H2O + H(+) = hydrogencarbonate + 2 NH4(+). It participates in nitrogen metabolism; urea degradation; CO(2) and NH(3) from urea (urease route): step 1/1. This is Urease subunit beta from Sinorhizobium fredii (strain NBRC 101917 / NGR234).